A 350-amino-acid chain; its full sequence is Selenide, water dikinase (350 aa).

The active site involves Sec15. Sec15 is a non-standard amino acid (selenocysteine). ATP-binding positions include Lys18 and 47-49 (HNE). Residue Asp50 participates in Mg(2+) binding. ATP contacts are provided by residues Asp67, Asp90, and 138-140 (GHS). Position 90 (Asp90) interacts with Mg(2+). Residue Asp227 coordinates Mg(2+).

This sequence belongs to the selenophosphate synthase 1 family. Class I subfamily. Homodimer. It depends on Mg(2+) as a cofactor.

It catalyses the reaction hydrogenselenide + ATP + H2O = selenophosphate + AMP + phosphate + 2 H(+). In terms of biological role, synthesizes selenophosphate from selenide and ATP. In Nitratidesulfovibrio vulgaris (strain DSM 19637 / Miyazaki F) (Desulfovibrio vulgaris), this protein is Selenide, water dikinase.